A 524-amino-acid polypeptide reads, in one-letter code: Ribonuclease Y (524 aa).

A helical membrane pass occupies residues 3–23; sequence IVINLFLIIFASVVFFAAGFF. The 61-residue stretch at 214 to 274 folds into the KH domain; it reads ALSVVHIQSD…LRREHAKLTL (61 aa). The HD domain occupies 340–432; the sequence is LLQHSREVAM…VDAANVISLA (93 aa).

This sequence belongs to the RNase Y family.

It localises to the cell membrane. In terms of biological role, endoribonuclease that initiates mRNA decay. This Chlorobium luteolum (strain DSM 273 / BCRC 81028 / 2530) (Pelodictyon luteolum) protein is Ribonuclease Y.